The chain runs to 378 residues: O-methyltransferase gsfD (378 aa).

S-adenosyl-L-methionine contacts are provided by residues 219 to 220 (GG), D244, 266 to 267 (DM), and R282. Residue H286 is the Proton acceptor of the active site.

Belongs to the class I-like SAM-binding methyltransferase superfamily. Cation-independent O-methyltransferase family.

The enzyme catalyses desmethyl-dehydrogriseofulvin + S-adenosyl-L-methionine = dehydrogriseofulvin + S-adenosyl-L-homocysteine + H(+). Its pathway is secondary metabolite biosynthesis; terpenoid biosynthesis. In terms of biological role, O-methyltransferase; part of the gene cluster that mediates the biosynthesis of griseofulvin, an important antifungal drug that has been in use for a long time for treating dermatophyte infections. The first step of the pathway is the formation of the heptaketide backbone by gsfA which is initiated by priming with acetyl-CoA, followed by sequential condensations of 6 malonyl-CoA units. The resulting benzophenone can undergo a spontaneous dehydration to form norlichexanthone. However, the true precursor for the griseofulvin biosynthesis is not norlichexanthone, but the heptaketide benzophenone that is O-methylated at 3-OH by gsfB to produce griseophenone D which is further methylated at 9-OH by gsfC to yield griseophenone C. Griseophenone C is then substrate of halogenase gsfI which is responsible for the regio-specific chlorination at the C13 position to form griseophenone B. The cytochrome P450 gsfF catalyzes the coupling of orcinol and phloroglucinol rings in griseophenone B to form desmethyl-dehydrogriseofulvin A which is further methylated at 5-OH by gsfD to yield dehydrogriseofulvin. Finally, gsfE performs stereospecific reduction of enone 18 of dehydrogriseofulvin to afford the final product griseofulvin. This Penicillium aethiopicum protein is O-methyltransferase gsfD.